The chain runs to 161 residues: Phosphopantetheine adenylyltransferase (161 aa).

Serine 8 contributes to the substrate binding site. ATP is bound by residues 8-9 and histidine 16; that span reads SF. Substrate is bound by residues lysine 40, threonine 72, and arginine 86. ATP is bound by residues 87–89, glutamate 97, and 122–128; these read GLR and HSFLSSS.

This sequence belongs to the bacterial CoaD family. Homohexamer. The cofactor is Mg(2+).

The protein resides in the cytoplasm. It catalyses the reaction (R)-4'-phosphopantetheine + ATP + H(+) = 3'-dephospho-CoA + diphosphate. The protein operates within cofactor biosynthesis; coenzyme A biosynthesis; CoA from (R)-pantothenate: step 4/5. Functionally, reversibly transfers an adenylyl group from ATP to 4'-phosphopantetheine, yielding dephospho-CoA (dPCoA) and pyrophosphate. In Prochlorococcus marinus (strain SARG / CCMP1375 / SS120), this protein is Phosphopantetheine adenylyltransferase.